The sequence spans 195 residues: Imidazoleglycerol-phosphate dehydratase (195 aa).

This sequence belongs to the imidazoleglycerol-phosphate dehydratase family.

Its subcellular location is the cytoplasm. It carries out the reaction D-erythro-1-(imidazol-4-yl)glycerol 3-phosphate = 3-(imidazol-4-yl)-2-oxopropyl phosphate + H2O. It participates in amino-acid biosynthesis; L-histidine biosynthesis; L-histidine from 5-phospho-alpha-D-ribose 1-diphosphate: step 6/9. This is Imidazoleglycerol-phosphate dehydratase from Burkholderia thailandensis (strain ATCC 700388 / DSM 13276 / CCUG 48851 / CIP 106301 / E264).